The primary structure comprises 211 residues: Large ribosomal subunit protein uL4 (211 aa).

Positions 40 to 85 (QQAHSRQGTASTLTRSEVRGGGRKPYKQKGTGRARQGSIRTPLRPG) are disordered. The segment covering 41–54 (QAHSRQGTASTLTR) has biased composition (polar residues). Basic residues predominate over residues 60-71 (GGRKPYKQKGTG).

Belongs to the universal ribosomal protein uL4 family. Part of the 50S ribosomal subunit.

One of the primary rRNA binding proteins, this protein initially binds near the 5'-end of the 23S rRNA. It is important during the early stages of 50S assembly. It makes multiple contacts with different domains of the 23S rRNA in the assembled 50S subunit and ribosome. Its function is as follows. Forms part of the polypeptide exit tunnel. This is Large ribosomal subunit protein uL4 from Prochlorococcus marinus (strain NATL2A).